Here is a 114-residue protein sequence, read N- to C-terminus: UPF0102 protein jhp_0762 (114 aa).

Belongs to the UPF0102 family.

The protein is UPF0102 protein jhp_0762 of Helicobacter pylori (strain J99 / ATCC 700824) (Campylobacter pylori J99).